A 311-amino-acid chain; its full sequence is Porphobilinogen deaminase (311 aa).

Cys245 is modified (S-(dipyrrolylmethanemethyl)cysteine).

It belongs to the HMBS family. Monomer. Dipyrromethane is required as a cofactor.

The enzyme catalyses 4 porphobilinogen + H2O = hydroxymethylbilane + 4 NH4(+). It functions in the pathway porphyrin-containing compound metabolism; protoporphyrin-IX biosynthesis; coproporphyrinogen-III from 5-aminolevulinate: step 2/4. Tetrapolymerization of the monopyrrole PBG into the hydroxymethylbilane pre-uroporphyrinogen in several discrete steps. This is Porphobilinogen deaminase from Acinetobacter baylyi (strain ATCC 33305 / BD413 / ADP1).